Consider the following 422-residue polypeptide: Histidine--tRNA ligase (422 aa).

The protein belongs to the class-II aminoacyl-tRNA synthetase family. As to quaternary structure, homodimer.

It is found in the cytoplasm. It carries out the reaction tRNA(His) + L-histidine + ATP = L-histidyl-tRNA(His) + AMP + diphosphate + H(+). The chain is Histidine--tRNA ligase from Syntrophomonas wolfei subsp. wolfei (strain DSM 2245B / Goettingen).